The primary structure comprises 192 residues: Small ribosomal subunit protein eS7 (192 aa).

The protein belongs to the eukaryotic ribosomal protein eS7 family.

The polypeptide is Small ribosomal subunit protein eS7 (RPS7) (Secale cereale (Rye)).